Reading from the N-terminus, the 330-residue chain is Mycothiol acetyltransferase (330 aa).

N-acetyltransferase domains lie at 5-142 and 171-328; these read LVTD…MPLR and VRLR…APRP. A 1D-myo-inositol 2-(L-cysteinylamino)-2-deoxy-alpha-D-glucopyranoside-binding site is contributed by glutamate 36. 80–82 provides a ligand contact to acetyl-CoA; the sequence is VVV. The disordered stretch occupies residues 142-161; sequence RDIAGDEPGGPWEAPELPEP. Glutamate 198, lysine 238, and glutamate 254 together coordinate 1D-myo-inositol 2-(L-cysteinylamino)-2-deoxy-alpha-D-glucopyranoside. Acetyl-CoA contacts are provided by residues 258-260 and 265-271; these read VGV and QGSGLGR. Residue tyrosine 292 coordinates 1D-myo-inositol 2-(L-cysteinylamino)-2-deoxy-alpha-D-glucopyranoside. 297 to 302 lines the acetyl-CoA pocket; sequence NEAAVR.

Belongs to the acetyltransferase family. MshD subfamily. Monomer.

The enzyme catalyses 1D-myo-inositol 2-(L-cysteinylamino)-2-deoxy-alpha-D-glucopyranoside + acetyl-CoA = mycothiol + CoA + H(+). Its function is as follows. Catalyzes the transfer of acetyl from acetyl-CoA to desacetylmycothiol (Cys-GlcN-Ins) to form mycothiol. This Nocardiopsis dassonvillei (strain ATCC 23218 / DSM 43111 / CIP 107115 / JCM 7437 / KCTC 9190 / NBRC 14626 / NCTC 10488 / NRRL B-5397 / IMRU 509) (Actinomadura dassonvillei) protein is Mycothiol acetyltransferase.